We begin with the raw amino-acid sequence, 631 residues long: 2-isopropylmalate synthase 2, chloroplastic (631 aa).

The N-terminal 46 residues, 1–46, are a transit peptide targeting the chloroplast; the sequence is MESSILKSPNLSSPSFGVPSIPALSSSSTSPFSSLHLRSQNHRTIS. In terms of domain architecture, Pyruvate carboxyltransferase spans 87 to 360; sequence VRIFDTTLRD…FTGIDTRHIV (274 aa). The a divalent metal cation site is built by D96, H293, and N329.

Belongs to the alpha-IPM synthase/homocitrate synthase family. LeuA type 1 subfamily. In terms of assembly, homotetramer. It depends on Mg(2+) as a cofactor. The cofactor is Mn(2+). As to expression, expressed in roots, stems, leaves, flowers and siliques.

It is found in the plastid. It localises to the chloroplast. It catalyses the reaction 3-methyl-2-oxobutanoate + acetyl-CoA + H2O = (2S)-2-isopropylmalate + CoA + H(+). The protein operates within amino-acid biosynthesis; L-leucine biosynthesis; L-leucine from 3-methyl-2-oxobutanoate: step 1/4. With respect to regulation, feedback inhibition by Leu. In terms of biological role, catalyzes the condensation of the acetyl group of acetyl-CoA with 3-methyl-2-oxobutanoate (2-oxoisovalerate) to form 3-carboxy-3-hydroxy-4-methylpentanoate (2-isopropylmalate). Involved in Leu biosynthesis, but does not participate in the chain elongation of glucosinolates. This Arabidopsis thaliana (Mouse-ear cress) protein is 2-isopropylmalate synthase 2, chloroplastic.